A 137-amino-acid polypeptide reads, in one-letter code: Basic phospholipase A2 homolog MT1 (137 aa).

The signal sequence occupies residues 1 to 16 (MRTLWIVALLLVGVEG). Cystine bridges form between Cys42/Cys131, Cys44/Cys60, Cys59/Cys111, Cys65/Cys137, Cys66/Cys104, Cys73/Cys97, and Cys91/Cys102. The interval 121–133 (KKYKAYFKFKCKK) is important for membrane-damaging activities in eukaryotes and bacteria; heparin-binding.

The protein belongs to the phospholipase A2 family. Group II subfamily. K49 sub-subfamily. Binds to heparin. In terms of tissue distribution, expressed by the venom gland.

It is found in the secreted. Its activity is regulated as follows. Heparin and wedelolactone inhibit the myotoxic activity. The PLA2 inhibitor, para-bromophenacyl bromide (BPB), inhibits the myotoxic activity. Snake venom phospholipase A2 homolog that lacks enzymatic activity. Has myotoxic activities. A model of myotoxic mechanism has been proposed: an apo Lys49-PLA2 is activated by the entrance of a hydrophobic molecule (e.g. fatty acid) at the hydrophobic channel of the protein leading to a reorientation of a monomer. This reorientation causes a transition between 'inactive' to 'active' states, causing alignment of C-terminal and membrane-docking sites (MDoS) side-by-side and putting the membrane-disruption sites (MDiS) in the same plane, exposed to solvent and in a symmetric position for both monomers. The MDoS region stabilizes the toxin on membrane by the interaction of charged residues with phospholipid head groups. Subsequently, the MDiS region destabilizes the membrane with penetration of hydrophobic residues. This insertion causes a disorganization of the membrane, allowing an uncontrolled influx of ions (i.e. calcium and sodium), and eventually triggering irreversible intracellular alterations and cell death. The chain is Basic phospholipase A2 homolog MT1 from Agkistrodon contortrix laticinctus (Broad-banded copperhead).